The primary structure comprises 348 residues: MPGWRLLAWAGARVLDRGTGGLGTALGSGNRTDICVLVRSLHGKSGTWWDEHLSEENVSFVKQLVSDENKAQLASKLCPLKDEPWPIHPWEPGSSRVGLVALKLGMMPLWTKDGKKHVVTLLQVQDCHVLKYTPKENHNGKMAALTVGGKTVSRFHKSTSILEFYQELGLPPKQKIKMFNVTDNAVIKPGTPLYAAHFRPGQYVDVTAKTIGKGFQGVMKRWGFKGQPATHGQTKTHRRPGAISTGDVARVWPGTKMPGQLGNVDRTAFGLKVWRINTKHNIIYVNGSVPGHRNCLVKIKDSVLPAYKDFCKNLPFPTYFPDEDEKELPEDLYDEEVCQPGAPSITFV.

Residues 1 to 40 (MPGWRLLAWAGARVLDRGTGGLGTALGSGNRTDICVLVRS) constitute a mitochondrion transit peptide.

The protein belongs to the universal ribosomal protein uL3 family. Component of the mitochondrial ribosome large subunit (39S) which comprises a 16S rRNA and about 50 distinct proteins.

The protein localises to the mitochondrion. In Bos taurus (Bovine), this protein is Large ribosomal subunit protein uL3m (MRPL3).